Consider the following 318-residue polypeptide: Phosphoenolpyruvate transferase (318 aa).

Asp-50 provides a ligand contact to 7,8-didemethyl-8-hydroxy-5-deazariboflavin.

This sequence belongs to the CofD family. Homodimer. The cofactor is Mg(2+).

The catalysed reaction is enolpyruvoyl-2-diphospho-5'-guanosine + 7,8-didemethyl-8-hydroxy-5-deazariboflavin = dehydro coenzyme F420-0 + GMP + H(+). The protein operates within cofactor biosynthesis; coenzyme F420 biosynthesis. In terms of biological role, catalyzes the transfer of the phosphoenolpyruvate moiety from enoylpyruvoyl-2-diphospho-5'-guanosine (EPPG) to 7,8-didemethyl-8-hydroxy-5-deazariboflavin (FO) with the formation of dehydro coenzyme F420-0 and GMP. In Streptomyces griseus subsp. griseus (strain JCM 4626 / CBS 651.72 / NBRC 13350 / KCC S-0626 / ISP 5235), this protein is Phosphoenolpyruvate transferase.